The chain runs to 891 residues: DNA polymerase I (891 aa).

The 5'-3' exonuclease domain occupies 1 to 313 (MEQPVIKEGT…LLDNTPALDN (313 aa)). The region spanning 314–488 (TPKKSCMIVL…RLCEYFEKGG (175 aa)) is the 3'-5' exonuclease domain. The segment at 492 to 890 (NLLSLAREIE…FIAKRWNELK (399 aa)) is polymerase.

It belongs to the DNA polymerase type-A family. In terms of assembly, single-chain monomer with multiple functions.

The catalysed reaction is DNA(n) + a 2'-deoxyribonucleoside 5'-triphosphate = DNA(n+1) + diphosphate. Functionally, in addition to polymerase activity, this DNA polymerase exhibits 3'-5' and 5'-3' exonuclease activity. The sequence is that of DNA polymerase I (polA) from Helicobacter pylori (strain ATCC 700392 / 26695) (Campylobacter pylori).